The primary structure comprises 833 residues: DNA gyrase subunit A (833 aa).

One can recognise a Topo IIA-type catalytic domain in the interval 34–500; sequence LPDVRDGLKP…AGDVRDIEDI (467 aa). The O-(5'-phospho-DNA)-tyrosine intermediate role is filled by Tyr122. Residues 527–533 carry the GyrA-box motif; the sequence is QKRGGQG.

It belongs to the type II topoisomerase GyrA/ParC subunit family. Heterotetramer, composed of two GyrA and two GyrB chains. In the heterotetramer, GyrA contains the active site tyrosine that forms a transient covalent intermediate with DNA, while GyrB binds cofactors and catalyzes ATP hydrolysis.

The protein localises to the cytoplasm. The enzyme catalyses ATP-dependent breakage, passage and rejoining of double-stranded DNA.. Its function is as follows. A type II topoisomerase that negatively supercoils closed circular double-stranded (ds) DNA in an ATP-dependent manner to modulate DNA topology and maintain chromosomes in an underwound state. Negative supercoiling favors strand separation, and DNA replication, transcription, recombination and repair, all of which involve strand separation. Also able to catalyze the interconversion of other topological isomers of dsDNA rings, including catenanes and knotted rings. Type II topoisomerases break and join 2 DNA strands simultaneously in an ATP-dependent manner. This is DNA gyrase subunit A from Chlamydia muridarum (strain MoPn / Nigg).